A 300-amino-acid chain; its full sequence is Ribosomal protein L11 methyltransferase (300 aa).

The S-adenosyl-L-methionine site is built by T152, G173, D195, and N234.

It belongs to the methyltransferase superfamily. PrmA family.

The protein localises to the cytoplasm. The catalysed reaction is L-lysyl-[protein] + 3 S-adenosyl-L-methionine = N(6),N(6),N(6)-trimethyl-L-lysyl-[protein] + 3 S-adenosyl-L-homocysteine + 3 H(+). Functionally, methylates ribosomal protein L11. This Burkholderia cenocepacia (strain ATCC BAA-245 / DSM 16553 / LMG 16656 / NCTC 13227 / J2315 / CF5610) (Burkholderia cepacia (strain J2315)) protein is Ribosomal protein L11 methyltransferase.